The sequence spans 327 residues: Transaldolase (327 aa).

Lys-132 acts as the Schiff-base intermediate with substrate in catalysis.

It belongs to the transaldolase family. Type 1 subfamily.

It is found in the cytoplasm. It catalyses the reaction D-sedoheptulose 7-phosphate + D-glyceraldehyde 3-phosphate = D-erythrose 4-phosphate + beta-D-fructose 6-phosphate. It functions in the pathway carbohydrate degradation; pentose phosphate pathway; D-glyceraldehyde 3-phosphate and beta-D-fructose 6-phosphate from D-ribose 5-phosphate and D-xylulose 5-phosphate (non-oxidative stage): step 2/3. Functionally, transaldolase is important for the balance of metabolites in the pentose-phosphate pathway. The sequence is that of Transaldolase from Chlamydia muridarum (strain MoPn / Nigg).